We begin with the raw amino-acid sequence, 415 residues long: Serine hydroxymethyltransferase (415 aa).

(6S)-5,6,7,8-tetrahydrofolate contacts are provided by residues L117 and 121–123; that span reads GHL. The residue at position 226 (K226) is an N6-(pyridoxal phosphate)lysine. (6S)-5,6,7,8-tetrahydrofolate contacts are provided by residues E241 and 349-351; that span reads SPF.

This sequence belongs to the SHMT family. In terms of assembly, homodimer. Pyridoxal 5'-phosphate is required as a cofactor.

It localises to the cytoplasm. It carries out the reaction (6R)-5,10-methylene-5,6,7,8-tetrahydrofolate + glycine + H2O = (6S)-5,6,7,8-tetrahydrofolate + L-serine. The protein operates within one-carbon metabolism; tetrahydrofolate interconversion. It functions in the pathway amino-acid biosynthesis; glycine biosynthesis; glycine from L-serine: step 1/1. Catalyzes the reversible interconversion of serine and glycine with tetrahydrofolate (THF) serving as the one-carbon carrier. This reaction serves as the major source of one-carbon groups required for the biosynthesis of purines, thymidylate, methionine, and other important biomolecules. Also exhibits THF-independent aldolase activity toward beta-hydroxyamino acids, producing glycine and aldehydes, via a retro-aldol mechanism. The protein is Serine hydroxymethyltransferase of Geobacter metallireducens (strain ATCC 53774 / DSM 7210 / GS-15).